We begin with the raw amino-acid sequence, 131 residues long: Large ribosomal subunit protein bL19 (131 aa).

The segment at 112-131 is disordered; that stretch reads KSARIAERAGGPKASASTEA.

Belongs to the bacterial ribosomal protein bL19 family.

Its function is as follows. This protein is located at the 30S-50S ribosomal subunit interface and may play a role in the structure and function of the aminoacyl-tRNA binding site. This Caulobacter vibrioides (strain ATCC 19089 / CIP 103742 / CB 15) (Caulobacter crescentus) protein is Large ribosomal subunit protein bL19.